The sequence spans 146 residues: Protein SprT-like (146 aa).

One can recognise a SprT-like domain in the interval 6–141 (YVKTVSIEDF…GCGLCQGKLI (136 aa)). Residue His64 coordinates Zn(2+). Glu65 is an active-site residue. A Zn(2+)-binding site is contributed by His68.

Belongs to the SprT family. It depends on Zn(2+) as a cofactor.

The protein localises to the cytoplasm. This Streptococcus thermophilus (strain CNRZ 1066) protein is Protein SprT-like.